The sequence spans 187 residues: UPF0340 protein SPP_0683 (187 aa).

The protein belongs to the UPF0340 family.

This chain is UPF0340 protein SPP_0683, found in Streptococcus pneumoniae (strain P1031).